Reading from the N-terminus, the 390-residue chain is Putative nickel insertion protein (390 aa).

The protein belongs to the LarC family.

The chain is Putative nickel insertion protein from Myxococcus xanthus (strain DK1622).